The following is a 379-amino-acid chain: MNAVTPTLPAPIGLLAELTHRCPLRCPYCSNPLELDKRSAELDTATWQRVLAEAAALGVLHIHLSGGEPTARQDIVEITRTCADLGLYSNLITSGVGAALGKLEALYDAGLDHVQLSFQSAEAGNAERIGGLKNAQAQKFAFAERVVALGLPLTLNAVIHRGNIDEVPTLIDLAVTLGAKRLEVAHTQYYGWAYVNRAALMPAKADVDRSIRVVEEARERLKGRLVIDLVVPDYYAKYPKACAGGWGRRLMNVTPAGKVLPCHAAETIPGLEFWNVQDHALADIWAHSPAFQAYRGTSWMKEPCRSCDRREKDWGGCRCQALALAGDAAATDPACSLSPLHAKIQALAIAESALEIAPDYQYRTIGGAPAVPQPEGASA.

In terms of domain architecture, Radical SAM core spans 8–220; that stretch reads LPAPIGLLAE…IRVVEEARER (213 aa). [4Fe-4S] cluster contacts are provided by Cys22, Cys26, and Cys29.

Belongs to the radical SAM superfamily. PqqE family. As to quaternary structure, interacts with PqqD. The interaction is necessary for activity of PqqE. [4Fe-4S] cluster serves as cofactor.

It catalyses the reaction [PQQ precursor protein] + S-adenosyl-L-methionine = E-Y cross-linked-[PQQ precursor protein] + 5'-deoxyadenosine + L-methionine + H(+). It participates in cofactor biosynthesis; pyrroloquinoline quinone biosynthesis. Functionally, catalyzes the cross-linking of a glutamate residue and a tyrosine residue in the PqqA protein as part of the biosynthesis of pyrroloquinoline quinone (PQQ). The polypeptide is PqqA peptide cyclase (Methylobacterium nodulans (strain LMG 21967 / CNCM I-2342 / ORS 2060)).